Consider the following 428-residue polypeptide: 4-hydroxy-3-methylbut-2-en-1-yl diphosphate synthase (flavodoxin) (428 aa).

Positions 300, 303, 346, and 353 each coordinate [4Fe-4S] cluster.

This sequence belongs to the IspG family. The cofactor is [4Fe-4S] cluster.

The enzyme catalyses (2E)-4-hydroxy-3-methylbut-2-enyl diphosphate + oxidized [flavodoxin] + H2O + 2 H(+) = 2-C-methyl-D-erythritol 2,4-cyclic diphosphate + reduced [flavodoxin]. The protein operates within isoprenoid biosynthesis; isopentenyl diphosphate biosynthesis via DXP pathway; isopentenyl diphosphate from 1-deoxy-D-xylulose 5-phosphate: step 5/6. In terms of biological role, converts 2C-methyl-D-erythritol 2,4-cyclodiphosphate (ME-2,4cPP) into 1-hydroxy-2-methyl-2-(E)-butenyl 4-diphosphate. This is 4-hydroxy-3-methylbut-2-en-1-yl diphosphate synthase (flavodoxin) from Methylobacillus flagellatus (strain ATCC 51484 / DSM 6875 / VKM B-1610 / KT).